Consider the following 463-residue polypeptide: Casein kinase 1 (463 aa).

Positions 9–278 (FKLGRKIGSG…LKRLFRDLFI (270 aa)) constitute a Protein kinase domain. ATP-binding positions include 15–23 (IGSGSFGEL) and Lys38. The Proton acceptor role is filled by Asp128. A compositionally biased stretch (polar residues) spans 296–306 (ESNRLRSSGRT). The interval 296 to 448 (ESNRLRSSGR…TARNVHDDPT (153 aa)) is disordered. The segment covering 315 to 328 (ERTERAAARQDVPD) has biased composition (basic and acidic residues). Composition is skewed to polar residues over residues 376 to 396 (TSSS…SRPS) and 404 to 440 (NRSN…TKTA).

This sequence belongs to the protein kinase superfamily. CK1 Ser/Thr protein kinase family. Casein kinase I subfamily. As to quaternary structure, monomer. Autophosphorylated. Expressed in leaves, stems, panicles and seeds. Expressed in root tissues and lamina joints.

The protein localises to the cytoplasm. Its subcellular location is the nucleus. The enzyme catalyses L-seryl-[protein] + ATP = O-phospho-L-seryl-[protein] + ADP + H(+). It carries out the reaction L-threonyl-[protein] + ATP = O-phospho-L-threonyl-[protein] + ADP + H(+). With respect to regulation, inhibited by N-(2-aminoethyl)-5-chloroisoquinoline-8-sulfonamide (CKI-7). Functionally, casein kinases are operationally defined by their preferential utilization of acidic proteins such as caseins as substrates. Can phosphorylate casein in vitro. Required for normal root development through modulation of cell elongation. Plants silencing CKI1 show abnormal root development, with reduced number of lateral and adventitious roots, and shortened primary roots as a result of reduced cell elongation. May be involved in abscisic acid (ABA) and brassinosteroid (BR) signaling pathways. Plays an important role in the adaptive growth and fitness under low temperature (LT) conditions. May confer tolerance to LT through an auxin-dependent process. This Oryza sativa subsp. japonica (Rice) protein is Casein kinase 1 (CKI1).